Consider the following 577-residue polypeptide: Myb-like protein N (577 aa).

Disordered regions lie at residues 1-23, 206-225, and 240-264; these read MMTINNNNLNNSNNINNNNNIYT, TPFSLQCPNSPNSTSSSPLN, and SSSSSASSSSTSSQPPSPQTLLSSS. Positions 213 to 225 are enriched in low complexity; sequence PNSPNSTSSSPLN. HTH myb-type domains follow at residues 403–465 and 466–517; these read KKST…CPAI and RKGS…SREV. 2 DNA-binding regions (H-T-H motif) span residues 437–461 and 489–513; these read WKKIALQIGGGKTGAQCAQHWKRVL and WKNVASEIRTRTDIQCRYQYFKSCM. A Myb-like domain is found at 518–570; the sequence is PWTPKEDEILQKKVIENKQDSTKEIGWMDLSKAMARARQTKIPRTALECKIRF.

It is found in the nucleus. This is Myb-like protein N (mybN) from Dictyostelium discoideum (Social amoeba).